The sequence spans 938 residues: Protein O-mannosyl-transferase Tmtc2 (938 aa).

Met-1 is a topological domain (cytoplasmic). A helical membrane pass occupies residues 2–22 (PSLEPWLWGDSCSWLGMLAML). The Extracellular portion of the chain corresponds to 23–34 (RLRLHKSNMDFT). The chain crosses the membrane as a helical span at residues 35 to 55 (CLFCCSLAFVLYLNTLGAGFV). The Cytoplasmic portion of the chain corresponds to 56 to 108 (YDDRRAILANADVSGGTPWQRSFSNDFWGTPLTDSGSHGSWRPLCVLSFRLNY). The helical transmembrane segment at 109–129 (LIGGGFAPWGFHLVNNLLHCV) threads the bilayer. The Extracellular portion of the chain corresponds to 130-139 (ATALVVRVAR). Residues 140 to 160 (TLLASVWAVLAAGALFAAHPI) form a helical membrane-spanning segment. Residues 161–164 (HTEA) lie on the Cytoplasmic side of the membrane. A helical membrane pass occupies residues 165-185 (VAGVVGRADLAACVCYLLTYL). The Extracellular portion of the chain corresponds to 186 to 208 (SYLRHMRWRESGDPRQWLALGAT). Residues 209-229 (LILAAAGLLCKETAITALLVC) form a helical membrane-spanning segment. Topologically, residues 230 to 249 (ALFDVMRGLSGQVDKQRLRS) are cytoplasmic. The chain crosses the membrane as a helical span at residues 250–270 (VCIVLGALFCMAYCRLVIVPG). The Extracellular segment spans residues 271–291 (PQTAFSSADNPIARTPSAWTR). Residues 292 to 312 (LLTFLYLPVFNLRLLLQPNVL) form a helical membrane-spanning segment. Topologically, residues 313–510 (SFDWGMDALP…HACVLIMSLS (198 aa)) are cytoplasmic. Positions 450–480 (RSSSSCSNSTNSSSSSSSSSSSSSSSSSSLS) are disordered. The helical transmembrane segment at 511–531 (FLALPFLPASNLLFYVGFVVA) threads the bilayer. At 532-533 (ER) the chain is on the extracellular side. Residues 534–554 (LLYLPSVGFCLLVGYGVSKLM) traverse the membrane as a helical segment. Residues 555 to 562 (SCNQRTRN) are Cytoplasmic-facing. A helical membrane pass occupies residues 563–580 (ILLLSFSLLLAAMSLRTL). The Extracellular segment spans residues 581 to 938 (RRNADWRDEE…NLAKLGVTNV (358 aa)). TPR repeat units lie at residues 602-635 (PKAL…RPNM), 636-669 (ADVH…RPNL), 670-703 (AVAY…DGAA), 715-748 (SSAY…LPGL), 753-786 (EILY…QPNQ), 788-821 (AAHL…APEQ), 822-855 (ASVY…APND), 856-889 (YTLV…RPGD), and 890-923 (AHAH…QPGD). Asn-800 carries an N-linked (GlcNAc...) asparagine glycan.

It belongs to the TMTC family.

It localises to the membrane. It is found in the endoplasmic reticulum. The enzyme catalyses a di-trans,poly-cis-dolichyl beta-D-mannosyl phosphate + L-seryl-[protein] = 3-O-(alpha-D-mannosyl)-L-seryl-[protein] + a di-trans,poly-cis-dolichyl phosphate + H(+). It carries out the reaction a di-trans,poly-cis-dolichyl beta-D-mannosyl phosphate + L-threonyl-[protein] = 3-O-(alpha-D-mannosyl)-L-threonyl-[protein] + a di-trans,poly-cis-dolichyl phosphate + H(+). The protein operates within protein modification; protein glycosylation. Functionally, transfers mannosyl residues to the hydroxyl group of serine or threonine residues. The protein is Protein O-mannosyl-transferase Tmtc2 of Drosophila melanogaster (Fruit fly).